The chain runs to 574 residues: Dihydroxy-acid dehydratase 2 (574 aa).

A disordered region spans residues 1-20 (MNAKTNIKQRLPSRHVTEGP). Cysteine 56 contributes to the [2Fe-2S] cluster binding site. Position 88 (aspartate 88) interacts with Mg(2+). Cysteine 129 is a [2Fe-2S] cluster binding site. Residues aspartate 130 and lysine 131 each contribute to the Mg(2+) site. Position 131 is an N6-carboxylysine (lysine 131). Cysteine 201 contacts [2Fe-2S] cluster. Glutamate 451 contributes to the Mg(2+) binding site. Serine 477 serves as the catalytic Proton acceptor.

This sequence belongs to the IlvD/Edd family. In terms of assembly, homodimer. [2Fe-2S] cluster serves as cofactor. It depends on Mg(2+) as a cofactor.

The enzyme catalyses (2R)-2,3-dihydroxy-3-methylbutanoate = 3-methyl-2-oxobutanoate + H2O. The catalysed reaction is (2R,3R)-2,3-dihydroxy-3-methylpentanoate = (S)-3-methyl-2-oxopentanoate + H2O. Its pathway is amino-acid biosynthesis; L-isoleucine biosynthesis; L-isoleucine from 2-oxobutanoate: step 3/4. It participates in amino-acid biosynthesis; L-valine biosynthesis; L-valine from pyruvate: step 3/4. In terms of biological role, functions in the biosynthesis of branched-chain amino acids. Catalyzes the dehydration of (2R,3R)-2,3-dihydroxy-3-methylpentanoate (2,3-dihydroxy-3-methylvalerate) into 2-oxo-3-methylpentanoate (2-oxo-3-methylvalerate) and of (2R)-2,3-dihydroxy-3-methylbutanoate (2,3-dihydroxyisovalerate) into 2-oxo-3-methylbutanoate (2-oxoisovalerate), the penultimate precursor to L-isoleucine and L-valine, respectively. This Bradyrhizobium diazoefficiens (strain JCM 10833 / BCRC 13528 / IAM 13628 / NBRC 14792 / USDA 110) protein is Dihydroxy-acid dehydratase 2.